We begin with the raw amino-acid sequence, 267 residues long: MIKWLWKANQPQAEMLAQWREALNIPLLAPLNEEEQQRLVSVASHLLQQKRLVPLQGVVLTPLMQARLTLLFALPVMELGAKWLDGFHEVLIYPSPFVVDDDWQDDAGLVHSGQTVQSGQSWEQGPIVLNWQDIQDSFDLSGFNLVIHEAAHKLDMRNGGHSNGVPPIAMRDVAAWEYDLHQAMDNIQDEIDMVGVDAASMDAYAASDPAECFAVLSEYFFSAPELLENRFPLVYRHFCTFYRQDPLARLKRWENESQNIESSSPMG.

The Zn(2+) site is built by His111, His148, His152, and Glu211.

The protein belongs to the MtfA family. Interacts with Mlc. Zn(2+) serves as cofactor.

Its subcellular location is the cytoplasm. Functionally, involved in the modulation of the activity of the glucose-phosphotransferase system (glucose-PTS). Interacts with the transcriptional repressor Mlc, preventing its interaction with DNA and leading to the modulation of expression of genes regulated by Mlc, including ptsG, which encodes the PTS system glucose-specific EIICB component. In terms of biological role, shows zinc-dependent metallopeptidase activity. The polypeptide is Mlc titration factor A (Yersinia enterocolitica serotype O:8 / biotype 1B (strain NCTC 13174 / 8081)).